The sequence spans 56 residues: HLRNHSGWKPFRCDKCDYQCVNKSMLNSHLKSHSNIYQYRCADCTYATKYCHSLKL.

3 C2H2-type zinc fingers span residues 1–5, 11–33, and 39–56; these read HLRNH, FRCD…LKSH, and YRCA…SLKL.

This sequence belongs to the hunchback C2H2-type zinc-finger protein family.

It is found in the nucleus. Functionally, gap class segmentation protein that controls development of head structures. The chain is Protein hunchback (hb) from Locusta migratoria (Migratory locust).